We begin with the raw amino-acid sequence, 804 residues long: Leucine--tRNA ligase (804 aa).

A 'HIGH' region motif is present at residues 40 to 51 (PYPSGAGLHVGH). The 'KMSKS' region signature appears at 576–580 (KMSKS). Lys-579 provides a ligand contact to ATP.

This sequence belongs to the class-I aminoacyl-tRNA synthetase family.

It localises to the cytoplasm. The catalysed reaction is tRNA(Leu) + L-leucine + ATP = L-leucyl-tRNA(Leu) + AMP + diphosphate. The protein is Leucine--tRNA ligase of Staphylococcus haemolyticus (strain JCSC1435).